Consider the following 532-residue polypeptide: Zinc metalloproteinase nas-29 (532 aa).

Residues 1-22 (MISKNTSFCGFLILVLATCMSA) form the signal peptide. 4 N-linked (GlcNAc...) asparagine glycosylation sites follow: N5, N27, N70, and N106. The propeptide occupies 23 to 134 (QFVSNESIKL…NGESTDRTKR (112 aa)). The 201-residue stretch at 135-335 (QAYLDNNYPA…HIMNQHYQCQ (201 aa)) folds into the Peptidase M12A domain. 6 disulfides stabilise this stretch: C179–C334, C201–C222, C338–C358, C360–C369, C380–C408, and C435–C456. H230 contributes to the Zn(2+) binding site. Residue E231 is part of the active site. Zn(2+) is bound by residues H234 and H240. In terms of domain architecture, EGF-like spans 330–370 (QHYQCQEKCPTQAPCQNGGFTNSRNCKVCKCPTGFGGAYCQ). One can recognise a CUB domain in the interval 380-494 (CGGYLNAEET…VSFEYSFVST (115 aa)). N-linked (GlcNAc...) asparagine glycosylation is present at N503.

Zn(2+) is required as a cofactor.

The protein localises to the secreted. Functionally, metalloprotease. This chain is Zinc metalloproteinase nas-29 (nas-29), found in Caenorhabditis elegans.